The chain runs to 885 residues: Leucine--tRNA ligase (885 aa).

Residues 48–58 carry the 'HIGH' region motif; it reads PYPSGKLHMGH. The 'KMSKS' region motif lies at 639 to 643; sequence TMSKS. Lys642 is a binding site for ATP.

The protein belongs to the class-I aminoacyl-tRNA synthetase family.

Its subcellular location is the cytoplasm. It carries out the reaction tRNA(Leu) + L-leucine + ATP = L-leucyl-tRNA(Leu) + AMP + diphosphate. The polypeptide is Leucine--tRNA ligase (Bordetella parapertussis (strain 12822 / ATCC BAA-587 / NCTC 13253)).